Reading from the N-terminus, the 89-residue chain is Toxin To14 (89 aa).

The signal sequence occupies residues 1–19; it reads MNCLMLIFVVFLLAFGVEC. In terms of domain architecture, LCN-type CS-alpha/beta spans 21–85; sequence KDDYPVDTAK…SPTKTSGRCN (65 aa). Cystine bridges form between C33/C84, C37/C60, C46/C67, and C50/C69.

Expressed by the venom gland.

It localises to the secreted. In terms of biological role, inhibits voltage-gated sodium channels (Nav). The sequence is that of Toxin To14 from Tityus obscurus (Amazonian scorpion).